A 245-amino-acid polypeptide reads, in one-letter code: UDP-2,3-diacylglucosamine hydrolase (245 aa).

Mn(2+)-binding residues include aspartate 8, histidine 10, aspartate 41, asparagine 80, and histidine 115. 80–81 (NR) contacts substrate. Aspartate 123, serine 161, lysine 165, lysine 168, and histidine 196 together coordinate substrate. Mn(2+)-binding residues include histidine 196 and histidine 198.

Belongs to the LpxH family. Mn(2+) serves as cofactor.

The protein resides in the cell inner membrane. The catalysed reaction is UDP-2-N,3-O-bis[(3R)-3-hydroxytetradecanoyl]-alpha-D-glucosamine + H2O = 2-N,3-O-bis[(3R)-3-hydroxytetradecanoyl]-alpha-D-glucosaminyl 1-phosphate + UMP + 2 H(+). The protein operates within glycolipid biosynthesis; lipid IV(A) biosynthesis; lipid IV(A) from (3R)-3-hydroxytetradecanoyl-[acyl-carrier-protein] and UDP-N-acetyl-alpha-D-glucosamine: step 4/6. In terms of biological role, hydrolyzes the pyrophosphate bond of UDP-2,3-diacylglucosamine to yield 2,3-diacylglucosamine 1-phosphate (lipid X) and UMP by catalyzing the attack of water at the alpha-P atom. Involved in the biosynthesis of lipid A, a phosphorylated glycolipid that anchors the lipopolysaccharide to the outer membrane of the cell. The protein is UDP-2,3-diacylglucosamine hydrolase of Psychromonas ingrahamii (strain DSM 17664 / CCUG 51855 / 37).